We begin with the raw amino-acid sequence, 69 residues long: uncharacterized protein (69 aa).

This is an uncharacterized protein from Bacillus subtilis (strain 168).